The chain runs to 113 residues: Ribonuclease P protein component (113 aa).

The protein belongs to the RnpA family. As to quaternary structure, consists of a catalytic RNA component (M1 or rnpB) and a protein subunit.

It carries out the reaction Endonucleolytic cleavage of RNA, removing 5'-extranucleotides from tRNA precursor.. In terms of biological role, RNaseP catalyzes the removal of the 5'-leader sequence from pre-tRNA to produce the mature 5'-terminus. It can also cleave other RNA substrates such as 4.5S RNA. The protein component plays an auxiliary but essential role in vivo by binding to the 5'-leader sequence and broadening the substrate specificity of the ribozyme. This chain is Ribonuclease P protein component, found in Desulforamulus reducens (strain ATCC BAA-1160 / DSM 100696 / MI-1) (Desulfotomaculum reducens).